A 415-amino-acid polypeptide reads, in one-letter code: Glutamate-1-semialdehyde 2,1-aminomutase (415 aa).

Lys-260 is modified (N6-(pyridoxal phosphate)lysine).

Belongs to the class-III pyridoxal-phosphate-dependent aminotransferase family. HemL subfamily. Requires pyridoxal 5'-phosphate as cofactor.

The protein resides in the cytoplasm. It catalyses the reaction (S)-4-amino-5-oxopentanoate = 5-aminolevulinate. The protein operates within porphyrin-containing compound metabolism; protoporphyrin-IX biosynthesis; 5-aminolevulinate from L-glutamyl-tRNA(Glu): step 2/2. The polypeptide is Glutamate-1-semialdehyde 2,1-aminomutase (Methanoculleus marisnigri (strain ATCC 35101 / DSM 1498 / JR1)).